The primary structure comprises 255 residues: MSIDWITVAAQIVNFLLLIWLLKRFLYRPILDGIDAREAEIAARMGEAAAVRQQAEARETEYEARIAQLSSSRAELLEEARRAAEAERDALLSKARARLEEEQAERAAHRAEEAARHRADLQRRGAEALLALTRKALRDLADEGLERRIVLQAAGRLADMGDDLREAAGDARQAVALTRDPLPEEVQARLRSDLGDVLEGVSLRFEVDPGQSPGLNLRLGGAQLGWTVDSYLNGLEATLAEAAGRPARRGGHDAA.

A helical transmembrane segment spans residues 5-22 (WITVAAQIVNFLLLIWLL).

It belongs to the ATPase B chain family. In terms of assembly, F-type ATPases have 2 components, F(1) - the catalytic core - and F(0) - the membrane proton channel. F(1) has five subunits: alpha(3), beta(3), gamma(1), delta(1), epsilon(1). F(0) has three main subunits: a(1), b(2) and c(10-14). The alpha and beta chains form an alternating ring which encloses part of the gamma chain. F(1) is attached to F(0) by a central stalk formed by the gamma and epsilon chains, while a peripheral stalk is formed by the delta and b chains.

It localises to the cell inner membrane. In terms of biological role, f(1)F(0) ATP synthase produces ATP from ADP in the presence of a proton or sodium gradient. F-type ATPases consist of two structural domains, F(1) containing the extramembraneous catalytic core and F(0) containing the membrane proton channel, linked together by a central stalk and a peripheral stalk. During catalysis, ATP synthesis in the catalytic domain of F(1) is coupled via a rotary mechanism of the central stalk subunits to proton translocation. Its function is as follows. Component of the F(0) channel, it forms part of the peripheral stalk, linking F(1) to F(0). The sequence is that of ATP synthase subunit b 1 from Dinoroseobacter shibae (strain DSM 16493 / NCIMB 14021 / DFL 12).